A 1898-amino-acid chain; its full sequence is Protein NYNRIN (1898 aa).

5 disordered regions span residues 289-315 (SNNQ…STNH), 424-450 (LPSA…CPRP), 467-533 (DVKD…TDQS), 618-691 (EPTT…TDAG), and 711-731 (VSLL…SGTL). A compositionally biased stretch (polar residues) spans 618 to 627 (EPTTPKTPQA). Positions 649–672 (PAATVSKAPAASKAPAAPKVPVTP) are enriched in low complexity. An RNase NYN domain is found at 792-942 (LRRVVIDGSS…LGRDGPTLDE (151 aa)). Positions 968 to 1019 (SASVTELSDDADSGPLESLPNMEEVREEKEERQDEEQRQGQGTQKAAEEDDL) are disordered. The segment covering 990-1005 (EEVREEKEERQDEEQR) has biased composition (basic and acidic residues). Residues 1304–1450 (LSTFVCIHMS…VDTLAKQGAQ (147 aa)) form the RNase H type-1 domain. Transmembrane regions (helical) follow at residues 1372-1392 (VVFL…LPLW) and 1408-1428 (PSLL…PFIY). An Integrase catalytic domain is found at 1609 to 1774 (RSTAPWSNLQ…ESRLTEPLWW (166 aa)).

It localises to the membrane. This Homo sapiens (Human) protein is Protein NYNRIN (NYNRIN).